A 488-amino-acid polypeptide reads, in one-letter code: 3-octaprenyl-4-hydroxybenzoate carboxy-lyase (488 aa).

N172 contacts Mn(2+). Prenylated FMN-binding positions include 175–177 (IYR), 189–191 (RWL), and 194–195 (RG). E238 contacts Mn(2+). The Proton donor role is filled by D287.

This sequence belongs to the UbiD family. Homohexamer. Requires prenylated FMN as cofactor. The cofactor is Mn(2+).

The protein resides in the cell membrane. It carries out the reaction a 4-hydroxy-3-(all-trans-polyprenyl)benzoate + H(+) = a 2-(all-trans-polyprenyl)phenol + CO2. It functions in the pathway cofactor biosynthesis; ubiquinone biosynthesis. Its function is as follows. Catalyzes the decarboxylation of 3-octaprenyl-4-hydroxy benzoate to 2-octaprenylphenol, an intermediate step in ubiquinone biosynthesis. This Pseudoalteromonas translucida (strain TAC 125) protein is 3-octaprenyl-4-hydroxybenzoate carboxy-lyase.